The chain runs to 384 residues: Queuine tRNA-ribosyltransferase (384 aa).

Asp92 serves as the catalytic Proton acceptor. Substrate is bound by residues 92–96 (DSGGF), Asp146, Gln192, and Gly219. The tract at residues 250–256 (GVGTPAE) is RNA binding. The active-site Nucleophile is the Asp269. Residues 274–278 (TRNAR) form an RNA binding; important for wobble base 34 recognition region. Residues Cys307, Cys309, Cys312, and His338 each coordinate Zn(2+).

The protein belongs to the queuine tRNA-ribosyltransferase family. Homodimer. Within each dimer, one monomer is responsible for RNA recognition and catalysis, while the other monomer binds to the replacement base PreQ1. Requires Zn(2+) as cofactor.

The catalysed reaction is 7-aminomethyl-7-carbaguanine + guanosine(34) in tRNA = 7-aminomethyl-7-carbaguanosine(34) in tRNA + guanine. It participates in tRNA modification; tRNA-queuosine biosynthesis. Its function is as follows. Catalyzes the base-exchange of a guanine (G) residue with the queuine precursor 7-aminomethyl-7-deazaguanine (PreQ1) at position 34 (anticodon wobble position) in tRNAs with GU(N) anticodons (tRNA-Asp, -Asn, -His and -Tyr). Catalysis occurs through a double-displacement mechanism. The nucleophile active site attacks the C1' of nucleotide 34 to detach the guanine base from the RNA, forming a covalent enzyme-RNA intermediate. The proton acceptor active site deprotonates the incoming PreQ1, allowing a nucleophilic attack on the C1' of the ribose to form the product. After dissociation, two additional enzymatic reactions on the tRNA convert PreQ1 to queuine (Q), resulting in the hypermodified nucleoside queuosine (7-(((4,5-cis-dihydroxy-2-cyclopenten-1-yl)amino)methyl)-7-deazaguanosine). The chain is Queuine tRNA-ribosyltransferase from Desulfosudis oleivorans (strain DSM 6200 / JCM 39069 / Hxd3) (Desulfococcus oleovorans).